The following is an 819-amino-acid chain: Leucine--tRNA ligase (819 aa).

Positions 40–51 (PYPSGAGLHVGH) match the 'HIGH' region motif. The short motif at 600–604 (KMSKS) is the 'KMSKS' region element. Position 603 (Lys-603) interacts with ATP.

Belongs to the class-I aminoacyl-tRNA synthetase family.

Its subcellular location is the cytoplasm. The enzyme catalyses tRNA(Leu) + L-leucine + ATP = L-leucyl-tRNA(Leu) + AMP + diphosphate. This Chlamydia trachomatis serovar A (strain ATCC VR-571B / DSM 19440 / HAR-13) protein is Leucine--tRNA ligase.